Here is a 141-residue protein sequence, read N- to C-terminus: Galactose-6-phosphate isomerase subunit LacA (141 aa).

The protein belongs to the LacAB/RpiB family. As to quaternary structure, heteromultimeric protein consisting of LacA and LacB.

It carries out the reaction aldehydo-D-galactose 6-phosphate = keto-D-tagatose 6-phosphate. It functions in the pathway carbohydrate metabolism; D-galactose 6-phosphate degradation; D-tagatose 6-phosphate from D-galactose 6-phosphate: step 1/1. This chain is Galactose-6-phosphate isomerase subunit LacA, found in Streptococcus pneumoniae (strain P1031).